The chain runs to 142 residues: uncharacterized protein (142 aa).

An N-terminal signal peptide occupies residues 1 to 26 (MITEFIKSFLLFFFLPFFLSMPMIFA).

This is an uncharacterized protein from Schizosaccharomyces pombe (strain 972 / ATCC 24843) (Fission yeast).